The following is a 224-amino-acid chain: Elongation factor 1-beta 2 (224 aa).

The residue at position 2 (Ala-2) is an N-acetylalanine. Residues 14-65 (VKSVEEHLAGKTYISGDQLSVDDVKVYAAVPVKPSDAFPNASKWYESVASQL) form the GST C-terminal domain. The disordered stretch occupies residues 89 to 139 (EAEAPAAAADDDDDMDLFGDETEEEKKAAEEREAAKKDTKKPKESGKSSVL). Residues 97 to 111 (ADDDDDMDLFGDETE) are compositionally biased toward acidic residues. A compositionally biased stretch (basic and acidic residues) spans 112 to 134 (EEKKAAEEREAAKKDTKKPKESG).

This sequence belongs to the EF-1-beta/EF-1-delta family. In terms of assembly, EF-1 is composed of 4 subunits: alpha, beta (1B-alpha=beta'), delta (1B-beta), and gamma (1B-gamma).

In terms of biological role, EF-1-beta and EF-1-delta stimulate the exchange of GDP bound to EF-1-alpha to GTP. The polypeptide is Elongation factor 1-beta 2 (Arabidopsis thaliana (Mouse-ear cress)).